A 69-amino-acid polypeptide reads, in one-letter code: uncharacterized protein (69 aa).

Disordered stretches follow at residues 1–32 (MSAP…GWGD) and 44–69 (QSDA…APSD). 2 stretches are compositionally biased toward basic and acidic residues: residues 7 to 32 (NLDR…GWGD) and 46 to 69 (DADK…APSD).

This is an uncharacterized protein from Schizosaccharomyces pombe (strain 972 / ATCC 24843) (Fission yeast).